A 950-amino-acid polypeptide reads, in one-letter code: Leucine--tRNA ligase 2 (950 aa).

A 'HIGH' region motif is present at residues 47 to 57 (PYPNSPFHLGH). A 'KMSKS' region motif is present at residues 631–635 (KMSKS). Lysine 634 contributes to the ATP binding site.

Belongs to the class-I aminoacyl-tRNA synthetase family.

It localises to the cytoplasm. It catalyses the reaction tRNA(Leu) + L-leucine + ATP = L-leucyl-tRNA(Leu) + AMP + diphosphate. The protein is Leucine--tRNA ligase 2 of Metallosphaera sedula (strain ATCC 51363 / DSM 5348 / JCM 9185 / NBRC 15509 / TH2).